A 257-amino-acid polypeptide reads, in one-letter code: Phosphonates import ATP-binding protein PhnC (257 aa).

In terms of domain architecture, ABC transporter spans 2–246; it reads IEFRNVSKVY…KFAEIYGDVA (245 aa). 35-42 serves as a coordination point for ATP; that stretch reads GLSGAGKS.

This sequence belongs to the ABC transporter superfamily. Phosphonates importer (TC 3.A.1.9.1) family. In terms of assembly, the complex is composed of two ATP-binding proteins (PhnC), two transmembrane proteins (PhnE) and a solute-binding protein (PhnD).

It is found in the cell membrane. It catalyses the reaction phosphonate(out) + ATP + H2O = phosphonate(in) + ADP + phosphate + H(+). Part of the ABC transporter complex PhnCDE involved in phosphonates import. Responsible for energy coupling to the transport system. The protein is Phosphonates import ATP-binding protein PhnC of Bacillus cereus (strain ATCC 14579 / DSM 31 / CCUG 7414 / JCM 2152 / NBRC 15305 / NCIMB 9373 / NCTC 2599 / NRRL B-3711).